The primary structure comprises 381 residues: Cytochrome P450 105C1 (381 aa).

Heme is bound at residue C330.

Belongs to the cytochrome P450 family. The cofactor is heme.

Its subcellular location is the cytoplasm. The protein is Cytochrome P450 105C1 (cyp105C1) of Streptomyces sp.